The following is a 476-amino-acid chain: MKILYISVECFPFIKTGGLGDVAYSFPKTLKKLGNDIKVFLIYSDSISEKYKEKMRSAYFFSLDLNGKSFPVEIFSLVMDDIEYLFFNDPSFKNIERTAYLDLHENSTFYLIFNKAISKFLELSAFKPEIIHANDWHTGILPLFLSGEKNENSKLKVVFTIHNLQYQGVFGASNVLKYLNEKERSNSLLSEIISNDIFNFMKAGIISSDIVTTVSETYKEEIKQPMQGMGLESVLNKYNSKLRGIINGLDYDIFNPSIDKYIEAKYDVSNYKEAKLINKIALQKELNLEQNKKIFLIGMISRLANQKGIDLVLNSLWNIVKDNDIQFVVLGTGDVNYESNLKSFGNKYPRNFKFINKFSDELSHKLYAGLDAFLIPSLFEPCGLTQLISLKYGCIPIARATGGLIDTITSYNDKQENANGFLFKEYTPEALYKSVKLAKNLFYNNKPEWNKLIYFGMDQRFGWEEIAKKYLESIYK.

Position 15 (Lys15) interacts with ADP-alpha-D-glucose.

The protein belongs to the glycosyltransferase 1 family. Bacterial/plant glycogen synthase subfamily.

The catalysed reaction is [(1-&gt;4)-alpha-D-glucosyl](n) + ADP-alpha-D-glucose = [(1-&gt;4)-alpha-D-glucosyl](n+1) + ADP + H(+). Its pathway is glycan biosynthesis; glycogen biosynthesis. In terms of biological role, synthesizes alpha-1,4-glucan chains using ADP-glucose. The sequence is that of Glycogen synthase from Mycoplasma mobile (strain ATCC 43663 / 163K / NCTC 11711) (Mesomycoplasma mobile).